A 434-amino-acid chain; its full sequence is Glutamate-1-semialdehyde 2,1-aminomutase (434 aa).

At lysine 271 the chain carries N6-(pyridoxal phosphate)lysine.

The protein belongs to the class-III pyridoxal-phosphate-dependent aminotransferase family. HemL subfamily. In terms of assembly, homodimer. The cofactor is pyridoxal 5'-phosphate.

The protein localises to the cytoplasm. It catalyses the reaction (S)-4-amino-5-oxopentanoate = 5-aminolevulinate. Its pathway is porphyrin-containing compound metabolism; protoporphyrin-IX biosynthesis; 5-aminolevulinate from L-glutamyl-tRNA(Glu): step 2/2. The protein operates within porphyrin-containing compound metabolism; chlorophyll biosynthesis. This Prochlorococcus marinus (strain MIT 9312) protein is Glutamate-1-semialdehyde 2,1-aminomutase.